A 970-amino-acid chain; its full sequence is Sodium/calcium exchanger 1 (970 aa).

Residues 1-32 (MLRLRLSPTFSVGFHLLAFVPLLFSHVDLISA) form the signal peptide. Residues 33 to 71 (DTEMEGEGNETGECTGSYYCKKGVILPIWEPQDPSFGDK) are Extracellular-facing. Asparagine 41 is a glycosylation site (N-linked (GlcNAc...) asparagine). A helical membrane pass occupies residues 72-92 (IARATVYFVAMVYMFLGVSII). The Cytoplasmic portion of the chain corresponds to 93–133 (ADRFMSSIEVITSQEKEITIKKPNGETTKTTVRIWNETVSN). Residues 134 to 154 (LTLMALGSSAPEILLSVIEVC) traverse the membrane as a helical segment. An Alpha-1 repeat occupies 138–178 (ALGSSAPEILLSVIEVCGHNFTAGDLGPSTIVGSAAFNMFI). Residues 155–167 (GHNFTAGDLGPST) are Extracellular-facing. Asparagine 157 carries N-linked (GlcNAc...) asparagine glycosylation. A helical membrane pass occupies residues 168–188 (IVGSAAFNMFIIIALCVYVVP). The Cytoplasmic segment spans residues 189–201 (DGETRKIKHLRVF). Residues 202 to 222 (FVTAAWSIFAYTWLYIILSVI) form a helical membrane-spanning segment. Residues 223–228 (SPGVVE) lie on the Extracellular side of the membrane. Residues 229–249 (VWEGLLTFFFFPICVVFAWVA) form a helical membrane-spanning segment. At 250-797 (DRRLLFYKYV…FVPPTEYWNG (548 aa)) the chain is on the cytoplasmic side. Positions 251–270 (RRLLFYKYVYKRYRAGKQRG) are putative calmodulin-binding region. A phosphoserine mark is found at serine 282 and serine 389. Calx-beta domains are found at residues 393 to 493 (VNTE…VHLS) and 524 to 624 (ATVT…LEIG). The Ca(2+) site is built by glutamate 417, aspartate 453, aspartate 478, aspartate 479, isoleucine 481, glutamate 483, glutamate 486, aspartate 530, aspartate 531, aspartate 532, glutamate 548, aspartate 584, aspartate 610, glutamate 611, glutamate 612, and glutamate 715. The helical transmembrane segment at 798 to 818 (WACFIVSILMIGILTAFIGDL) threads the bilayer. Residues 819-821 (ASH) lie on the Extracellular side of the membrane. Residues 822–842 (FGCTIGLKDSVTAVVFVALGT) traverse the membrane as a helical segment. The Alpha-2 repeat unit spans residues 839–875 (ALGTSVPDTFASKVAATQDQYADASIGNVTGSNAVNV). The Cytoplasmic segment spans residues 843 to 871 (SVPDTFASKVAATQDQYADASIGNVTGSN). Residues 872–892 (AVNVFLGIGVAWSIAAIYHAA) form a helical membrane-spanning segment. Over 893-903 (NGEQFKVSPGT) the chain is Extracellular. Residues 904–924 (LAFSVTLFTIFAFINVGVLLY) traverse the membrane as a helical segment. Residues 925–941 (RRRPEIGGELGGPRTAK) lie on the Cytoplasmic side of the membrane. The helical transmembrane segment at 942 to 962 (LLTSCLFVLLWLLYIFFSSLE) threads the bilayer. The Extracellular portion of the chain corresponds to 963–970 (AYCHIKGF).

It belongs to the Ca(2+):cation antiporter (CaCA) (TC 2.A.19) family. SLC8 subfamily. In terms of tissue distribution, detected in heart (at protein level). Detected in heart.

The protein resides in the cell membrane. The enzyme catalyses Ca(2+)(in) + 3 Na(+)(out) = Ca(2+)(out) + 3 Na(+)(in). Activated by micromolar levels of Ca(2+). Its function is as follows. Mediates the exchange of one Ca(2+) ion against three to four Na(+) ions across the cell membrane, and thereby contributes to the regulation of cytoplasmic Ca(2+) levels and Ca(2+)-dependent cellular processes. Contributes to Ca(2+) transport during excitation-contraction coupling in muscle. In a first phase, voltage-gated channels mediate the rapid increase of cytoplasmic Ca(2+) levels due to release of Ca(2+) stores from the endoplasmic reticulum. SLC8A1 mediates the export of Ca(2+) from the cell during the next phase, so that cytoplasmic Ca(2+) levels rapidly return to baseline. Required for normal embryonic heart development and the onset of heart contractions. This Felis catus (Cat) protein is Sodium/calcium exchanger 1 (SLC8A1).